The primary structure comprises 196 residues: Protein LSM12 homolog A (196 aa).

The Sm domain maps to 3-73 (APGPGEYFSV…VSEVDIINDR (71 aa)). The region spanning 81–175 (ASLNISKLAN…IVEKHFRDVE (95 aa)) is the AD domain. Positions 174–196 (VESQKTMQRSQAQQTQKDSSLSS) are disordered. Polar residues predominate over residues 177-196 (QKTMQRSQAQQTQKDSSLSS).

Belongs to the LSM12 family.

The sequence is that of Protein LSM12 homolog A (lsm12a) from Danio rerio (Zebrafish).